We begin with the raw amino-acid sequence, 523 residues long: Effector protein hopAB1 (523 aa).

3 disordered regions span residues 1–94, 165–223, and 299–320; these read MPGI…EAQQ, VRQQ…QGLD, and RQTT…SGRR. A compositionally biased stretch (basic and acidic residues) spans 18–31; sequence TDGEPVTEREHDSS. Over residues 181–194 the composition is skewed to low complexity; the sequence is SSSGSSQRSLIGRS.

This sequence belongs to the HopAB family.

The protein resides in the secreted. In terms of biological role, effector protein that plays different roles depending on the species and plant cultivars that interact with the pathogen. Acts as a virulence determinant by enhancing the development of disease symptoms and bacterial growth. Acts as an avirulence factor by eliciting hypersensitive response (HR) and plant resistance. In Pseudomonas savastanoi pv. glycinea (Pseudomonas syringae pv. glycinea), this protein is Effector protein hopAB1 (hopAB1).